The following is a 123-amino-acid chain: NADH-quinone oxidoreductase subunit A (123 aa).

The next 3 helical transmembrane spans lie at 11 to 31 (YLPI…IMIL), 68 to 88 (LVAI…PWAI), and 93 to 113 (IGKM…IGFI).

It belongs to the complex I subunit 3 family. In terms of assembly, NDH-1 is composed of 14 different subunits. Subunits NuoA, H, J, K, L, M, N constitute the membrane sector of the complex.

It localises to the cell inner membrane. It carries out the reaction a quinone + NADH + 5 H(+)(in) = a quinol + NAD(+) + 4 H(+)(out). NDH-1 shuttles electrons from NADH, via FMN and iron-sulfur (Fe-S) centers, to quinones in the respiratory chain. The immediate electron acceptor for the enzyme in this species is believed to be ubiquinone. Couples the redox reaction to proton translocation (for every two electrons transferred, four hydrogen ions are translocated across the cytoplasmic membrane), and thus conserves the redox energy in a proton gradient. The protein is NADH-quinone oxidoreductase subunit A of Rickettsia prowazekii (strain Madrid E).